A 315-amino-acid polypeptide reads, in one-letter code: Methionyl-tRNA formyltransferase (315 aa).

Residue 113-116 (SLLP) coordinates (6S)-5,6,7,8-tetrahydrofolate.

It belongs to the Fmt family.

The catalysed reaction is L-methionyl-tRNA(fMet) + (6R)-10-formyltetrahydrofolate = N-formyl-L-methionyl-tRNA(fMet) + (6S)-5,6,7,8-tetrahydrofolate + H(+). In terms of biological role, attaches a formyl group to the free amino group of methionyl-tRNA(fMet). The formyl group appears to play a dual role in the initiator identity of N-formylmethionyl-tRNA by promoting its recognition by IF2 and preventing the misappropriation of this tRNA by the elongation apparatus. This chain is Methionyl-tRNA formyltransferase, found in Pectobacterium carotovorum subsp. carotovorum (strain PC1).